The following is a 229-amino-acid chain: 2-C-methyl-D-erythritol 4-phosphate cytidylyltransferase (229 aa).

It belongs to the IspD/TarI cytidylyltransferase family. IspD subfamily.

It carries out the reaction 2-C-methyl-D-erythritol 4-phosphate + CTP + H(+) = 4-CDP-2-C-methyl-D-erythritol + diphosphate. It functions in the pathway isoprenoid biosynthesis; isopentenyl diphosphate biosynthesis via DXP pathway; isopentenyl diphosphate from 1-deoxy-D-xylulose 5-phosphate: step 2/6. Functionally, catalyzes the formation of 4-diphosphocytidyl-2-C-methyl-D-erythritol from CTP and 2-C-methyl-D-erythritol 4-phosphate (MEP). In Clostridium botulinum (strain Okra / Type B1), this protein is 2-C-methyl-D-erythritol 4-phosphate cytidylyltransferase.